The sequence spans 104 residues: MDVQTKYGAGQNKVLGGANQKKIVESEEDIALPELNPSVPQAIQRARNALKMTQKELAFKINERPGVINEYESGSAIPSQAVLSKLEKALNVKLRGKEIGKPLK.

Residues 43–97 (IQRARNALKMTQKELAFKINERPGVINEYESGSAIPSQAVLSKLEKALNVKLRGK) enclose the HTH cro/C1-type domain. The segment at residues 54 to 73 (QKELAFKINERPGVINEYES) is a DNA-binding region (H-T-H motif).

This is Vegetative-specific protein H7 (cinD-1) from Dictyostelium discoideum (Social amoeba).